The following is a 196-amino-acid chain: uncharacterized protein (196 aa).

An N-terminal signal peptide occupies residues 1-23; sequence MSARAPKELRLALPPCLLNRTFA. N-linked (GlcNAc...) asparagine glycans are attached at residues N19 and N26. The Extracellular portion of the chain corresponds to 24–60; the sequence is SHNASGGSNAGIRSSGAGGGTCITQVGQQLFQSFSST. A helical membrane pass occupies residues 61 to 81; it reads LVLIVLVTLIFCLIVLSLSTF. Topologically, residues 82-196 are cytoplasmic; it reads HIHKRRMKKR…EGLLQTVVLS (115 aa). Positions 93–184 are disordered; the sequence is MQRAQEEYER…AHAASSCLDT (92 aa). Basic and acidic residues-rich tracts occupy residues 95–106 and 124–135; these read RAQEEYERDHCS and HGKETRLERQPR. Pro residues predominate over residues 161–171; it reads CAPPPPPPVPS. Low complexity predominate over residues 172 to 181; sequence PHGAHAASSC.

It localises to the membrane. This is an uncharacterized protein from Rattus norvegicus (Rat).